The chain runs to 313 residues: Coproporphyrin III ferrochelatase (313 aa).

His191 and Glu270 together coordinate Fe(2+).

This sequence belongs to the ferrochelatase family.

The protein localises to the cytoplasm. The catalysed reaction is Fe-coproporphyrin III + 2 H(+) = coproporphyrin III + Fe(2+). The protein operates within porphyrin-containing compound metabolism; protoheme biosynthesis. Functionally, involved in coproporphyrin-dependent heme b biosynthesis. Catalyzes the insertion of ferrous iron into coproporphyrin III to form Fe-coproporphyrin III. The protein is Coproporphyrin III ferrochelatase of Enterococcus faecalis (strain ATCC 700802 / V583).